A 541-amino-acid chain; its full sequence is Tetratricopeptide repeat protein 8 (541 aa).

Residues 14 to 47 (YFRRRKFQLCADLCTQMLEKSPYDQEPDPELPVH) form a TPR 1 repeat. The disordered stretch occupies residues 118–137 (PITGFLRPSTQSGRPGTMEQ). 7 TPR repeats span residues 251–284 (WWWK…QEMV), 285–317 (DTFL…FPGE), 318–351 (VTLL…DNTH), 352–385 (VEAI…GIYN), 386–419 (GQLF…AENE), 423–456 (ADVW…NNNH), and 457–490 (AEAY…APHM).

As to quaternary structure, part of BBSome complex, that contains BBS1, BBS2, BBS4, BBS5, BBS7, BBS8/TTC8, BBS9 and BBIP10. Interacts with PCM1. Interacts with CCDC28B. Interacts with PKD1. Widely expressed.

It is found in the cytoplasm. The protein localises to the cytoskeleton. It localises to the microtubule organizing center. The protein resides in the centrosome. Its subcellular location is the cell projection. It is found in the cilium membrane. The protein localises to the centriolar satellite. It localises to the cilium. The BBSome complex is thought to function as a coat complex required for sorting of specific membrane proteins to the primary cilia. The BBSome complex is required for ciliogenesis but is dispensable for centriolar satellite function. This ciliogenic function is mediated in part by the Rab8 GDP/GTP exchange factor, which localizes to the basal body and contacts the BBSome. Rab8(GTP) enters the primary cilium and promotes extension of the ciliary membrane. Firstly the BBSome associates with the ciliary membrane and binds to RAB3IP/Rabin8, the guanosyl exchange factor (GEF) for Rab8 and then the Rab8-GTP localizes to the cilium and promotes docking and fusion of carrier vesicles to the base of the ciliary membrane. The BBSome complex, together with the LTZL1, controls SMO ciliary trafficking and contributes to the sonic hedgehog (SHH) pathway regulation. Required for proper BBSome complex assembly and its ciliary localization. This is Tetratricopeptide repeat protein 8 (TTC8) from Homo sapiens (Human).